A 219-amino-acid chain; its full sequence is HTH-type transcriptional regulator LutR (219 aa).

The region spanning 1–56 (MIKNGELKPGDKLDSVQALAESFQVSRSAVREALSALKAMGLVEMKQGEGTYLKEF) is the HTH gntR-type domain. The H-T-H motif DNA-binding region spans 16–35 (VQALAESFQVSRSAVREALS).

Functionally, negatively regulates the transcription of the lutABC operon, which is required for L-lactate utilization. LutR activity is regulated by lactate, since presence of L-lactate, that probably binds to LutR, leads to derepression of the operon. Also appears to be essential for bacilysin biosynthesis. This is HTH-type transcriptional regulator LutR (lutR) from Bacillus subtilis (strain 168).